A 394-amino-acid polypeptide reads, in one-letter code: Myb-like protein R (394 aa).

A run of 2 helical transmembrane segments spans residues 11-31 (IGAQ…EFII) and 99-119 (FFIG…LIIF). One can recognise a Myb-like domain in the interval 325-377 (GNWSLDEQKALMVEVSTLGNKSEINWFFISKQLFLKGISRNARECQRKHESIQ).

Its subcellular location is the membrane. The chain is Myb-like protein R (mybR) from Dictyostelium discoideum (Social amoeba).